A 349-amino-acid chain; its full sequence is Adenosine deaminase (349 aa).

Positions 25 and 27 each coordinate Zn(2+). Substrate contacts are provided by histidine 27, aspartate 29, and glycine 182. Residue histidine 209 participates in Zn(2+) binding. Glutamate 212 acts as the Proton donor in catalysis. Aspartate 289 provides a ligand contact to Zn(2+).

Belongs to the metallo-dependent hydrolases superfamily. Adenosine and AMP deaminases family. Adenosine deaminase subfamily. Zn(2+) is required as a cofactor.

It catalyses the reaction adenosine + H2O + H(+) = inosine + NH4(+). The catalysed reaction is 2'-deoxyadenosine + H2O + H(+) = 2'-deoxyinosine + NH4(+). Functionally, catalyzes the hydrolytic deamination of adenosine and 2-deoxyadenosine. The protein is Adenosine deaminase of Streptococcus mutans serotype c (strain ATCC 700610 / UA159).